The chain runs to 151 residues: Large-conductance mechanosensitive channel (151 aa).

2 helical membrane-spanning segments follow: residues 12–32 and 71–91; these read GNIV…ALVT and VLLS…FLVV. Positions 122 to 151 are disordered; sequence AQTNGDSPGRHGGRGTPSPTDGPLASTESQ.

Belongs to the MscL family. Homopentamer.

It localises to the cell membrane. Functionally, channel that opens in response to stretch forces in the membrane lipid bilayer. May participate in the regulation of osmotic pressure changes within the cell. The sequence is that of Large-conductance mechanosensitive channel from Mycobacterium bovis (strain BCG / Pasteur 1173P2).